The chain runs to 573 residues: Protein DSE1 (573 aa).

WD repeat units lie at residues 144–185 (DFPP…GCAK), 315–351 (RKNTSLDCVWISNHHVAQSLNDKIQIWDIQSCDGKPV), 356–395 (AKKGYIESLKFNENTGALYSSDDQGFVICWDLQNLQNMKY), and 397–448 (ELVH…NGKG). Residues 500–509 (SDSSMLSLSN) show a composition bias toward low complexity. The interval 500–519 (SDSSMLSLSNESDHSMTETS) is disordered. Lys-553 participates in a covalent cross-link: Glycyl lysine isopeptide (Lys-Gly) (interchain with G-Cter in ubiquitin).

Belongs to the WD repeat DSE1 family.

It localises to the bud neck. Functionally, involved in cell wall metabolism and required for the separation of the mother and daughter cells. The protein is Protein DSE1 (DSE1) of Saccharomyces cerevisiae (strain ATCC 204508 / S288c) (Baker's yeast).